A 288-amino-acid chain; its full sequence is Elongation factor Ts (288 aa).

The segment at 79–82 (TDFV) is involved in Mg(2+) ion dislocation from EF-Tu.

This sequence belongs to the EF-Ts family.

Its subcellular location is the cytoplasm. Associates with the EF-Tu.GDP complex and induces the exchange of GDP to GTP. It remains bound to the aminoacyl-tRNA.EF-Tu.GTP complex up to the GTP hydrolysis stage on the ribosome. This chain is Elongation factor Ts, found in Ehrlichia ruminantium (strain Gardel).